Here is a 441-residue protein sequence, read N- to C-terminus: 4-alpha-glucanotransferase (441 aa).

Residues Asp-13, Asn-15, Asp-17, Val-19, and Asp-21 each contribute to the Ca(2+) site. Asp-186 functions as the Nucleophile in the catalytic mechanism. Glu-216 functions as the Proton donor in the catalytic mechanism.

It belongs to the glycosyl hydrolase 13 family. Monomer. It depends on Ca(2+) as a cofactor.

Its subcellular location is the cytoplasm. It carries out the reaction Transfers a segment of a (1-&gt;4)-alpha-D-glucan to a new position in an acceptor, which may be glucose or a (1-&gt;4)-alpha-D-glucan.. This chain is 4-alpha-glucanotransferase (mgtA), found in Thermotoga maritima (strain ATCC 43589 / DSM 3109 / JCM 10099 / NBRC 100826 / MSB8).